Here is a 148-residue protein sequence, read N- to C-terminus: Universal stress protein YxiE (148 aa).

The first 18 residues, 1–18 (MFNKMLVAIDGSDMSAKA), serve as a signal peptide directing secretion.

This sequence belongs to the universal stress protein A family.

This is Universal stress protein YxiE (yxiE) from Bacillus subtilis (strain 168).